The chain runs to 416 residues: Actin-like protein 9 (416 aa).

Residues 1–40 are disordered; it reads MDASRPKSSESQSSLEAPRPGPNPSPNVVNKPLQRDSPGM.

It belongs to the actin family. In terms of assembly, interacts with ACTL7A. Testis-specific.

It is found in the cytoplasmic vesicle. The protein localises to the secretory vesicle. It localises to the acrosome. The protein resides in the cytoplasm. Its subcellular location is the cytoskeleton. It is found in the perinuclear theca. Its function is as follows. Testis-specic protein that plays an important role in fusion of proacrosomal vesicles and perinuclear theca formation. This is Actin-like protein 9 from Homo sapiens (Human).